Consider the following 274-residue polypeptide: Rhamnulose-1-phosphate aldolase (274 aa).

The active site involves Glu-117. 3 residues coordinate Zn(2+): His-141, His-143, and His-212.

Belongs to the aldolase class II family. RhaD subfamily. As to quaternary structure, homotetramer. The cofactor is Zn(2+).

The protein localises to the cytoplasm. The enzyme catalyses L-rhamnulose 1-phosphate = (S)-lactaldehyde + dihydroxyacetone phosphate. It participates in carbohydrate degradation; L-rhamnose degradation; glycerone phosphate from L-rhamnose: step 3/3. Functionally, catalyzes the reversible cleavage of L-rhamnulose-1-phosphate to dihydroxyacetone phosphate (DHAP) and L-lactaldehyde. This is Rhamnulose-1-phosphate aldolase from Escherichia coli O127:H6 (strain E2348/69 / EPEC).